Here is a 456-residue protein sequence, read N- to C-terminus: Bifunctional protein GlmU (456 aa).

Residues 1 to 229 (MSSHAMSVVI…LSEVEGVNNR (229 aa)) are pyrophosphorylase. UDP-N-acetyl-alpha-D-glucosamine contacts are provided by residues 11 to 14 (LAAG), K25, Q76, 81 to 82 (GT), 103 to 105 (YGD), G140, E154, N169, and N227. Position 105 (D105) interacts with Mg(2+). N227 is a Mg(2+) binding site. A linker region spans residues 230–250 (LQLARLEHVYQAEQAEKLLLA). The N-acetyltransferase stretch occupies residues 251–456 (GVMLRDPARF…QGWRRPVKKK (206 aa)). The UDP-N-acetyl-alpha-D-glucosamine site is built by R333 and K351. The active-site Proton acceptor is H363. Residues Y366 and N377 each contribute to the UDP-N-acetyl-alpha-D-glucosamine site. Residues A380, 386 to 387 (NY), S405, A423, and R440 each bind acetyl-CoA.

In the N-terminal section; belongs to the N-acetylglucosamine-1-phosphate uridyltransferase family. It in the C-terminal section; belongs to the transferase hexapeptide repeat family. In terms of assembly, homotrimer. It depends on Mg(2+) as a cofactor.

It is found in the cytoplasm. The enzyme catalyses alpha-D-glucosamine 1-phosphate + acetyl-CoA = N-acetyl-alpha-D-glucosamine 1-phosphate + CoA + H(+). The catalysed reaction is N-acetyl-alpha-D-glucosamine 1-phosphate + UTP + H(+) = UDP-N-acetyl-alpha-D-glucosamine + diphosphate. It functions in the pathway nucleotide-sugar biosynthesis; UDP-N-acetyl-alpha-D-glucosamine biosynthesis; N-acetyl-alpha-D-glucosamine 1-phosphate from alpha-D-glucosamine 6-phosphate (route II): step 2/2. Its pathway is nucleotide-sugar biosynthesis; UDP-N-acetyl-alpha-D-glucosamine biosynthesis; UDP-N-acetyl-alpha-D-glucosamine from N-acetyl-alpha-D-glucosamine 1-phosphate: step 1/1. It participates in bacterial outer membrane biogenesis; LPS lipid A biosynthesis. Its function is as follows. Catalyzes the last two sequential reactions in the de novo biosynthetic pathway for UDP-N-acetylglucosamine (UDP-GlcNAc). The C-terminal domain catalyzes the transfer of acetyl group from acetyl coenzyme A to glucosamine-1-phosphate (GlcN-1-P) to produce N-acetylglucosamine-1-phosphate (GlcNAc-1-P), which is converted into UDP-GlcNAc by the transfer of uridine 5-monophosphate (from uridine 5-triphosphate), a reaction catalyzed by the N-terminal domain. The chain is Bifunctional protein GlmU from Cronobacter sakazakii (strain ATCC BAA-894) (Enterobacter sakazakii).